A 607-amino-acid polypeptide reads, in one-letter code: TOM1-like protein 8 (607 aa).

The VHS domain maps to 9–138 (ATSDMLIGPD…ELLRAGIVFP (130 aa)). The disordered stretch occupies residues 141-175 (PQITPSSGQNGPSTRYPQNSRNARQEAIDTSTESE). The region spanning 175–263 (EFPTLSLTEI…LLAKHEAIAS (89 aa)) is the GAT domain. Serine 297 is subject to Phosphoserine. Over residues 355-379 (NNCESSTPTSNPHANHQKVQQNYSN) the composition is skewed to polar residues. Disordered stretches follow at residues 355 to 393 (NNCESSTPTSNPHANHQKVQQNYSNGFGPGHQEQSYYGQ), 407 to 460 (QPSS…SPTH), and 555 to 582 (DNGNNNTNPYQVSSHQPPPMMKPMNKKP). The residue at position 410 (serine 410) is a Phosphoserine. Over residues 448-460 (QSPSSSPQYSPTH) the composition is skewed to low complexity. Polar residues predominate over residues 555–569 (DNGNNNTNPYQVSSH).

It belongs to the TOM1 family. Specifically expressed in siliques and flowers.

Its subcellular location is the membrane. In terms of biological role, might contribute to the loading of the ESCRT machinery. This is TOM1-like protein 8 from Arabidopsis thaliana (Mouse-ear cress).